A 301-amino-acid chain; its full sequence is GTP cyclohydrolase FolE2 (301 aa).

The protein belongs to the GTP cyclohydrolase IV family.

It catalyses the reaction GTP + H2O = 7,8-dihydroneopterin 3'-triphosphate + formate + H(+). The protein operates within cofactor biosynthesis; 7,8-dihydroneopterin triphosphate biosynthesis; 7,8-dihydroneopterin triphosphate from GTP: step 1/1. Converts GTP to 7,8-dihydroneopterin triphosphate. This Pseudomonas savastanoi pv. phaseolicola (strain 1448A / Race 6) (Pseudomonas syringae pv. phaseolicola (strain 1448A / Race 6)) protein is GTP cyclohydrolase FolE2.